Reading from the N-terminus, the 557-residue chain is uncharacterized protein (557 aa).

A disordered region spans residues N17–T38. The next 9 membrane-spanning stretches (helical) occupy residues L60–A80, G94–A114, S214–M234, F261–F281, G297–A317, L348–A368, V407–F427, I468–V488, and W498–G518.

Belongs to the amino acid-polyamine-organocation (APC) superfamily.

Its subcellular location is the membrane. This is an uncharacterized protein from Schizosaccharomyces pombe (strain 972 / ATCC 24843) (Fission yeast).